Reading from the N-terminus, the 1072-residue chain is Zn(2)-C6 fungal-type transcription factor FTF2 (1072 aa).

Positions 179–206 (CIACRRKKIRCSGEKPACKHCLRSRIPC) form a DNA-binding region, zn(2)-C6 fungal-type.

It is found in the nucleus. In terms of biological role, zn(2)-C6 fungal-type transcription factor that has a role in conidia production and also in plant colonization. Acts as a negative regulator of the production of macroconidia and is required for full virulence and the positive regulation of SIX effectors. In addition, FTF2 is also involved in the regulation of class II hydrophobins FOXG_02746 and FOXG_02748 likely required for plant colonization. This Fusarium oxysporum f. sp. lycopersici (strain 4287 / CBS 123668 / FGSC 9935 / NRRL 34936) (Fusarium vascular wilt of tomato) protein is Zn(2)-C6 fungal-type transcription factor FTF2.